Reading from the N-terminus, the 66-residue chain is U10-theraphotoxin-Cg1a 3 (66 aa).

Positions 1–21 (MKTSVLFVIFGLALLFCLSFA) are cleaved as a signal peptide. A propeptide spanning residues 22–29 (DELEDTGR) is cleaved from the precursor. 3 cysteine pairs are disulfide-bonded: cysteine 31-cysteine 46, cysteine 38-cysteine 51, and cysteine 45-cysteine 58.

The protein belongs to the neurotoxin 10 (Hwtx-1) family. 29 (Jztx-13) subfamily. As to expression, expressed by the venom gland.

The protein resides in the secreted. Functionally, probable ion channel inhibitor. The protein is U10-theraphotoxin-Cg1a 3 of Chilobrachys guangxiensis (Chinese earth tiger tarantula).